The chain runs to 769 residues: Apoptotic enhancer 1 protein (769 aa).

3 disordered regions span residues 69 to 88, 265 to 396, and 451 to 518; these read PVRVVAQPPPPHPQALSQQY, SVEP…LDES, and PQLP…RSDD. A compositionally biased stretch (low complexity) spans 275–284; that stretch reads QQQQPSPQMM. A compositionally biased stretch (basic and acidic residues) spans 285–295; sequence KSEEFSEKRDL. The span at 339 to 353 shows a compositional bias: low complexity; it reads STDPHSNHSSPSTSS. 3 stretches are compositionally biased toward polar residues: residues 354-378, 453-467, and 474-491; these read QKAPTLITFSPPSFEQKINSSTMTR, LPTSQEEPSAITSET, and NSESKQVATSSDSTNNLE. ANK repeat units follow at residues 585 to 617 and 618 to 652; these read EGITALHNAICAGHYEIVRFLIENDADVNAQDS and DGWTPLHCAASCNNLPMVRQLVEGGGCVLASTLSD. Positions 684-746 constitute an SH3 domain; the sequence is INTGKVYAAY…PRTYLALYPS (63 aa).

Belongs to the iASPP family. In terms of assembly, interacts with cep-1/p53; the interaction inhibits pro-apoptotic activity of cep-1.

It is found in the nucleus. In terms of biological role, negetively regulates apoptosis via its interaction with cep-1. The polypeptide is Apoptotic enhancer 1 protein (Caenorhabditis elegans).